The primary structure comprises 115 residues: Small ribosomal subunit protein uS17 (115 aa).

The protein belongs to the universal ribosomal protein uS17 family. Part of the 30S ribosomal subunit.

One of the primary rRNA binding proteins, it binds specifically to the 5'-end of 16S ribosomal RNA. The sequence is that of Small ribosomal subunit protein uS17 from Granulibacter bethesdensis (strain ATCC BAA-1260 / CGDNIH1).